The primary structure comprises 508 residues: Glycogen synthase (508 aa).

Lys15 serves as a coordination point for ADP-alpha-D-glucose. Residues 483-508 (ARNRAETRPQTASALSYREPRPAAEY) are disordered.

Belongs to the glycosyltransferase 1 family. Bacterial/plant glycogen synthase subfamily.

It catalyses the reaction [(1-&gt;4)-alpha-D-glucosyl](n) + ADP-alpha-D-glucose = [(1-&gt;4)-alpha-D-glucosyl](n+1) + ADP + H(+). It participates in glycan biosynthesis; glycogen biosynthesis. Its function is as follows. Synthesizes alpha-1,4-glucan chains using ADP-glucose. The polypeptide is Glycogen synthase (Paracidovorax citrulli (strain AAC00-1) (Acidovorax citrulli)).